A 340-amino-acid polypeptide reads, in one-letter code: Farnesyl pyrophosphate synthase 1 (340 aa).

Residues Lys47, Arg50, and Gln85 each contribute to the isopentenyl diphosphate site. Mg(2+)-binding residues include Asp92 and Asp96. A dimethylallyl diphosphate-binding site is contributed by Arg101. Arg102 contacts isopentenyl diphosphate. Dimethylallyl diphosphate contacts are provided by Lys188, Thr189, Gln227, Lys244, and Lys253.

It belongs to the FPP/GGPP synthase family. The cofactor is Mg(2+). In terms of tissue distribution, mainly expressed in trichomes and flowers, and, to a lower extent, in leaves, roots and stems.

The protein resides in the cytoplasm. Its subcellular location is the nucleus. The catalysed reaction is isopentenyl diphosphate + dimethylallyl diphosphate = (2E)-geranyl diphosphate + diphosphate. It carries out the reaction isopentenyl diphosphate + (2E)-geranyl diphosphate = (2E,6E)-farnesyl diphosphate + diphosphate. Its pathway is isoprenoid biosynthesis; farnesyl diphosphate biosynthesis; farnesyl diphosphate from geranyl diphosphate and isopentenyl diphosphate: step 1/1. The protein operates within sesquiterpene biosynthesis. It participates in isoprenoid biosynthesis; geranyl diphosphate biosynthesis; geranyl diphosphate from dimethylallyl diphosphate and isopentenyl diphosphate: step 1/1. Catalyzes the sequential condensation of isopentenyl pyrophosphate with the allylic pyrophosphates, dimethylallyl pyrophosphate, and then with the resultant geranylpyrophosphate to the ultimate product farnesyl pyrophosphate. The polypeptide is Farnesyl pyrophosphate synthase 1 (Cannabis sativa (Hemp)).